Here is a 485-residue protein sequence, read N- to C-terminus: NADH-quinone oxidoreductase subunit N (485 aa).

A run of 14 helical transmembrane segments spans residues 8–28, 35–55, 71–91, 105–125, 127–147, 159–179, 203–223, 235–255, 271–291, 297–317, 326–346, 373–393, 408–430, and 455–475; these read LIAL…MLSI, FLNA…LWFV, GFAM…CTFA, FYLL…ANHL, ALFL…GYAF, YTIL…LVYA, LLAG…LVPF, PAPV…GVVM, VVLG…ALSQ, LLGY…IALQ, VGVY…VVSL, AAVM…LGFI, WWLV…RVAV, and IVVL…QPLI.

It belongs to the complex I subunit 2 family. NDH-1 is composed of 13 different subunits. Subunits NuoA, H, J, K, L, M, N constitute the membrane sector of the complex.

The protein localises to the cell inner membrane. It carries out the reaction a quinone + NADH + 5 H(+)(in) = a quinol + NAD(+) + 4 H(+)(out). NDH-1 shuttles electrons from NADH, via FMN and iron-sulfur (Fe-S) centers, to quinones in the respiratory chain. The immediate electron acceptor for the enzyme in this species is believed to be ubiquinone. Couples the redox reaction to proton translocation (for every two electrons transferred, four hydrogen ions are translocated across the cytoplasmic membrane), and thus conserves the redox energy in a proton gradient. This chain is NADH-quinone oxidoreductase subunit N, found in Salmonella schwarzengrund (strain CVM19633).